The following is a 274-amino-acid chain: ATP synthase subunit a (274 aa).

Helical transmembrane passes span 43–63 (TLNIDSLFFSVVLGLAFLFVF), 103–123 (VIAPLALTVFVWVLLMNMMDL), 149–169 (DVSITLSMALGVFILILFYSI), 223–243 (LIFILIAGLLPWWSQWMLSLP), and 245–265 (AIFHILIITLQAFIFMVLTIV).

Belongs to the ATPase A chain family. As to quaternary structure, F-type ATPases have 2 components, CF(1) - the catalytic core - and CF(0) - the membrane proton channel. CF(1) has five subunits: alpha(3), beta(3), gamma(1), delta(1), epsilon(1). CF(0) has three main subunits: a(1), b(2) and c(9-12). The alpha and beta chains form an alternating ring which encloses part of the gamma chain. CF(1) is attached to CF(0) by a central stalk formed by the gamma and epsilon chains, while a peripheral stalk is formed by the delta and b chains.

It localises to the cell inner membrane. Its function is as follows. Key component of the proton channel; it plays a direct role in the translocation of protons across the membrane. This chain is ATP synthase subunit a, found in Yersinia enterocolitica serotype O:8 / biotype 1B (strain NCTC 13174 / 8081).